A 39-amino-acid chain; its full sequence is Photosystem II reaction center protein J (39 aa).

The chain crosses the membrane as a helical span at residues 9-29 (LWLVATVGGMAAITVLGIFIY).

The protein belongs to the PsbJ family. As to quaternary structure, PSII is composed of 1 copy each of membrane proteins PsbA, PsbB, PsbC, PsbD, PsbE, PsbF, PsbH, PsbI, PsbJ, PsbK, PsbL, PsbM, PsbT, PsbX, PsbY, PsbZ, Psb30/Ycf12, at least 3 peripheral proteins of the oxygen-evolving complex and a large number of cofactors. It forms dimeric complexes.

It localises to the plastid. Its subcellular location is the chloroplast thylakoid membrane. Its function is as follows. One of the components of the core complex of photosystem II (PSII). PSII is a light-driven water:plastoquinone oxidoreductase that uses light energy to abstract electrons from H(2)O, generating O(2) and a proton gradient subsequently used for ATP formation. It consists of a core antenna complex that captures photons, and an electron transfer chain that converts photonic excitation into a charge separation. The polypeptide is Photosystem II reaction center protein J (Porphyra purpurea (Red seaweed)).